A 122-amino-acid chain; its full sequence is Large ribosomal subunit protein uL14 (122 aa).

It belongs to the universal ribosomal protein uL14 family. Part of the 50S ribosomal subunit. Forms a cluster with proteins L3 and L19. In the 70S ribosome, L14 and L19 interact and together make contacts with the 16S rRNA in bridges B5 and B8.

Its function is as follows. Binds to 23S rRNA. Forms part of two intersubunit bridges in the 70S ribosome. The sequence is that of Large ribosomal subunit protein uL14 from Methylococcus capsulatus (strain ATCC 33009 / NCIMB 11132 / Bath).